Consider the following 308-residue polypeptide: Putative ankyrin repeat protein R835 (308 aa).

ANK repeat units lie at residues 100–129, 152–181, 190–217, 218–247, 249–277, and 279–305; these read DINEAIKNIIIVNNIDSLKYLLEKGANIDL, PMNKFLPIAVEYGHLNLVKFLVEKGVYVDF, SEYTPLVAACSAGHIKIVEYLIEKGANY, KSSYGVYLAAEKGHYDIVKFLIDKGTDLEK, GLRSLNEVIKKGHFDIMKLFINSGLEIDY, and YYIYKAGLRGHTDIVKYLVMMQMSKQI.

This Acanthamoeba polyphaga (Amoeba) protein is Putative ankyrin repeat protein R835.